The sequence spans 143 residues: MGIAKEFREFAVKGNVIDLAVGVIIGGAFGKIVDSLVNDVIMPIVGLVFGRLDFSNLFLVLGSVPPGTPATLDALRKAGVPVLAHGSFITVAVNFLILAFIIFMMVKQINRLKRAAPPAPPATPAAPPEDIVLLREIRDSLRR.

3 consecutive transmembrane segments (helical) span residues 10–30 (FAVK…GAFG), 40–60 (VIMP…LFLV), and 86–106 (GSFI…FMMV).

The protein belongs to the MscL family. In terms of assembly, homopentamer.

It is found in the cell inner membrane. Channel that opens in response to stretch forces in the membrane lipid bilayer. May participate in the regulation of osmotic pressure changes within the cell. The polypeptide is Large-conductance mechanosensitive channel (Paracidovorax citrulli (strain AAC00-1) (Acidovorax citrulli)).